The primary structure comprises 268 residues: 4-hydroxy-tetrahydrodipicolinate reductase (268 aa).

NAD(+) is bound by residues 9-14 (GAAGRM), 99-101 (GTT), and 123-126 (ASNF). Catalysis depends on histidine 156, which acts as the Proton donor/acceptor. Residue histidine 157 coordinates (S)-2,3,4,5-tetrahydrodipicolinate. The active-site Proton donor is lysine 160. Residue 166–167 (GT) participates in (S)-2,3,4,5-tetrahydrodipicolinate binding.

The protein belongs to the DapB family.

It is found in the cytoplasm. The catalysed reaction is (S)-2,3,4,5-tetrahydrodipicolinate + NAD(+) + H2O = (2S,4S)-4-hydroxy-2,3,4,5-tetrahydrodipicolinate + NADH + H(+). It carries out the reaction (S)-2,3,4,5-tetrahydrodipicolinate + NADP(+) + H2O = (2S,4S)-4-hydroxy-2,3,4,5-tetrahydrodipicolinate + NADPH + H(+). It functions in the pathway amino-acid biosynthesis; L-lysine biosynthesis via DAP pathway; (S)-tetrahydrodipicolinate from L-aspartate: step 4/4. In terms of biological role, catalyzes the conversion of 4-hydroxy-tetrahydrodipicolinate (HTPA) to tetrahydrodipicolinate. This chain is 4-hydroxy-tetrahydrodipicolinate reductase, found in Saccharophagus degradans (strain 2-40 / ATCC 43961 / DSM 17024).